Reading from the N-terminus, the 337-residue chain is 1-aminocyclopropane-1-carboxylate deaminase (337 aa).

Lys50 is modified (N6-(pyridoxal phosphate)lysine). Ser77 functions as the Nucleophile in the catalytic mechanism.

This sequence belongs to the ACC deaminase/D-cysteine desulfhydrase family. Homotrimer. The cofactor is pyridoxal 5'-phosphate.

The enzyme catalyses 1-aminocyclopropane-1-carboxylate + H2O = 2-oxobutanoate + NH4(+). In terms of biological role, catalyzes a cyclopropane ring-opening reaction, the irreversible conversion of 1-aminocyclopropane-1-carboxylate (ACC) to ammonia and alpha-ketobutyrate. Allows growth on ACC as a nitrogen source. This chain is 1-aminocyclopropane-1-carboxylate deaminase, found in Bradyrhizobium diazoefficiens (strain JCM 10833 / BCRC 13528 / IAM 13628 / NBRC 14792 / USDA 110).